A 317-amino-acid chain; its full sequence is Melanocyte-stimulating hormone receptor (317 aa).

At 1 to 37 (MPALGSPRRLLGSLNCTPPATLPLTLAPNRTGPQCLE) the chain is on the extracellular side. Asn29 carries an N-linked (GlcNAc...) asparagine glycan. Residues 38–63 (VSIPDGLFLSLGLVSLVENVLVVAAI) form a helical membrane-spanning segment. Residues 64–72 (AKNRNLHSP) are Cytoplasmic-facing. The helical transmembrane segment at 73–93 (MYYFICCLAMSDLLVSVSNVL) threads the bilayer. Over 94 to 118 (ETAVMLLLEAGVLATRAAVVQQLDN) the chain is Extracellular. A helical transmembrane segment spans residues 119 to 140 (VIDVLICSSMVSSLCFLGAIAV). Topologically, residues 141 to 163 (DRYISIFYALRYHSVVTLPRAWR) are cytoplasmic. The chain crosses the membrane as a helical span at residues 164-183 (IIAAIWVASILTSVLSITYY). Topologically, residues 184–191 (NHTVVLLC) are extracellular. The helical transmembrane segment at 192 to 211 (LVGFFIAMLALMAVLYVHML) threads the bilayer. Topologically, residues 212–240 (ARACQHARGIARLQKRQRPIHQGFGLKGA) are cytoplasmic. A helical membrane pass occupies residues 241 to 266 (ATLTILLGVFFLCWGPFFLHLSLIVL). At 267–279 (CPQHPTCGCIFKN) the chain is on the extracellular side. The chain crosses the membrane as a helical span at residues 280 to 300 (FNLFLALIICNAIVDPLIYAF). Topologically, residues 301–317 (RSQELRKTLQEVLQCSW) are cytoplasmic. Cys315 is lipidated: S-palmitoyl cysteine.

This sequence belongs to the G-protein coupled receptor 1 family. As to quaternary structure, interacts with MGRN1, but does not undergo MGRN1-mediated ubiquitination; this interaction competes with GNAS-binding and thus inhibits agonist-induced cAMP production. Interacts with OPN3; the interaction results in a decrease in MC1R-mediated cAMP signaling and ultimately a decrease in melanin production in melanocytes.

It is found in the cell membrane. Receptor for MSH (alpha, beta and gamma) and ACTH. The activity of this receptor is mediated by G proteins which activate adenylate cyclase. Mediates melanogenesis, the production of eumelanin (black/brown) and phaeomelanin (red/yellow), via regulation of cAMP signaling in melanocytes. The sequence is that of Melanocyte-stimulating hormone receptor (MC1R) from Capra hircus (Goat).